The chain runs to 225 residues: Enolase-phosphatase E1 (225 aa).

This sequence belongs to the HAD-like hydrolase superfamily. MasA/MtnC family. In terms of assembly, monomer. It depends on Mg(2+) as a cofactor.

It carries out the reaction 5-methylsulfanyl-2,3-dioxopentyl phosphate + H2O = 1,2-dihydroxy-5-(methylsulfanyl)pent-1-en-3-one + phosphate. Its pathway is amino-acid biosynthesis; L-methionine biosynthesis via salvage pathway; L-methionine from S-methyl-5-thio-alpha-D-ribose 1-phosphate: step 3/6. It functions in the pathway amino-acid biosynthesis; L-methionine biosynthesis via salvage pathway; L-methionine from S-methyl-5-thio-alpha-D-ribose 1-phosphate: step 4/6. Bifunctional enzyme that catalyzes the enolization of 2,3-diketo-5-methylthiopentyl-1-phosphate (DK-MTP-1-P) into the intermediate 2-hydroxy-3-keto-5-methylthiopentenyl-1-phosphate (HK-MTPenyl-1-P), which is then dephosphorylated to form the acireductone 1,2-dihydroxy-3-keto-5-methylthiopentene (DHK-MTPene). This chain is Enolase-phosphatase E1, found in Pseudomonas aeruginosa (strain LESB58).